We begin with the raw amino-acid sequence, 403 residues long: Putative F-box protein At5g41500 (403 aa).

The region spanning 2 to 47 (ATTISNLPRELIEEILSRVPLRAMKAMRLTCKSWNNLSKSESFMKM) is the F-box domain.

The polypeptide is Putative F-box protein At5g41500 (Arabidopsis thaliana (Mouse-ear cress)).